Reading from the N-terminus, the 275-residue chain is tRNA (guanine-N(1)-)-methyltransferase (275 aa).

S-adenosyl-L-methionine is bound by residues Gly-124 and 149–154; that span reads IGDYVL.

This sequence belongs to the RNA methyltransferase TrmD family. As to quaternary structure, homodimer.

The protein resides in the cytoplasm. The catalysed reaction is guanosine(37) in tRNA + S-adenosyl-L-methionine = N(1)-methylguanosine(37) in tRNA + S-adenosyl-L-homocysteine + H(+). In terms of biological role, specifically methylates guanosine-37 in various tRNAs. The chain is tRNA (guanine-N(1)-)-methyltransferase from Bifidobacterium animalis subsp. lactis (strain AD011).